A 309-amino-acid polypeptide reads, in one-letter code: Homoserine kinase (309 aa).

ATP is bound at residue 91–101; sequence PIGSGLGSSAC.

This sequence belongs to the GHMP kinase family. Homoserine kinase subfamily.

It is found in the cytoplasm. It carries out the reaction L-homoserine + ATP = O-phospho-L-homoserine + ADP + H(+). It functions in the pathway amino-acid biosynthesis; L-threonine biosynthesis; L-threonine from L-aspartate: step 4/5. In terms of biological role, catalyzes the ATP-dependent phosphorylation of L-homoserine to L-homoserine phosphate. This chain is Homoserine kinase (thrB), found in Serratia marcescens.